Consider the following 352-residue polypeptide: Invasion chromosome antigen T (352 aa).

This sequence belongs to the IcaT/YfdF family.

It is found in the secreted. Its function is as follows. May contribute to pathogenesis, although some of its characteristics suggest it is a fossil gene. In Shigella flexneri serotype 5a (strain M90T), this protein is Invasion chromosome antigen T.